Reading from the N-terminus, the 83-residue chain is MPFQQLLSQLPDQALPVLLAYGALGGAYLLVVPLALLLWMNKRWHQMGKIERTAIYGMVFLFFPGLILFAPFINLRMAGQGEA.

The next 2 helical transmembrane spans lie at 17–37 (VLLA…LALL) and 53–73 (TAIY…APFI).

This sequence belongs to the complex I NdhL subunit family. As to quaternary structure, NDH-1 can be composed of about 15 different subunits; different subcomplexes with different compositions have been identified which probably have different functions.

Its subcellular location is the cellular thylakoid membrane. It catalyses the reaction a plastoquinone + NADH + (n+1) H(+)(in) = a plastoquinol + NAD(+) + n H(+)(out). The enzyme catalyses a plastoquinone + NADPH + (n+1) H(+)(in) = a plastoquinol + NADP(+) + n H(+)(out). NDH-1 shuttles electrons from an unknown electron donor, via FMN and iron-sulfur (Fe-S) centers, to quinones in the respiratory and/or the photosynthetic chain. The immediate electron acceptor for the enzyme in this species is believed to be plastoquinone. Couples the redox reaction to proton translocation, and thus conserves the redox energy in a proton gradient. Cyanobacterial NDH-1 also plays a role in inorganic carbon-concentration. This Synechococcus sp. (strain RCC307) protein is NAD(P)H-quinone oxidoreductase subunit L.